A 549-amino-acid chain; its full sequence is Calcium-dependent protein kinase 5 (549 aa).

A lipid anchor (N-myristoyl glycine) is attached at Gly2. Positions 43-69 (DEPAGKKAPRGSAAAADAPHAASMKRG) are disordered. Positions 52-64 (RGSAAAADAPHAA) are enriched in low complexity. One can recognise a Protein kinase domain in the interval 92 to 350 (YALGRKLGQG…AHEVLCHPWI (259 aa)). Residues 98 to 106 (LGQGQFGTT) and Lys121 contribute to the ATP site. The active-site Proton acceptor is the Asp216. An autoinhibitory domain region spans residues 356-386 (APDRPLDPAVLSRIKQFSAMNKLKKMALRVI). 4 EF-hand domains span residues 393-428 (EEIA…YGST), 429-464 (LKDT…LNKL), 465-500 (EREE…HNMP), and 501-534 (DAFL…GNMG). Positions 406, 408, 410, 417, 442, 444, 446, 448, 453, 478, 480, 482, 484, 489, 512, 514, 516, 518, and 523 each coordinate Ca(2+).

Belongs to the protein kinase superfamily. Ser/Thr protein kinase family. CDPK subfamily.

The protein localises to the membrane. It catalyses the reaction L-seryl-[protein] + ATP = O-phospho-L-seryl-[protein] + ADP + H(+). It carries out the reaction L-threonyl-[protein] + ATP = O-phospho-L-threonyl-[protein] + ADP + H(+). With respect to regulation, activated by calcium. Autophosphorylation may play an important role in the regulation of the kinase activity. May play a role in signal transduction pathways that involve calcium as a second messenger. In Oryza sativa subsp. japonica (Rice), this protein is Calcium-dependent protein kinase 5.